The sequence spans 226 residues: Glycerol-3-phosphate acyltransferase (226 aa).

The next 6 helical transmembrane spans lie at 1–21 (MGFW…LGSF), 60–80 (FVLG…YYLF), 102–122 (LVTL…FLGF), 134–154 (ILLA…AVVV), 159–178 (IVSL…MVFL), and 182–197 (LPYI…YVIL).

Belongs to the PlsY family. In terms of assembly, probably interacts with PlsX.

It localises to the cell inner membrane. It carries out the reaction an acyl phosphate + sn-glycerol 3-phosphate = a 1-acyl-sn-glycero-3-phosphate + phosphate. It participates in lipid metabolism; phospholipid metabolism. In terms of biological role, catalyzes the transfer of an acyl group from acyl-phosphate (acyl-PO(4)) to glycerol-3-phosphate (G3P) to form lysophosphatidic acid (LPA). This enzyme utilizes acyl-phosphate as fatty acyl donor, but not acyl-CoA or acyl-ACP. In Nostoc sp. (strain PCC 7120 / SAG 25.82 / UTEX 2576), this protein is Glycerol-3-phosphate acyltransferase.